The following is a 571-amino-acid chain: Glutamine--tRNA ligase (571 aa).

Positions 35-45 match the 'HIGH' region motif; sequence PEPNGYLHIGH. Residues 36 to 38 and 42 to 48 contribute to the ATP site; these read EPN and HIGHAKS. L-glutamine contacts are provided by D68 and Y213. ATP is bound by residues T232, 262 to 263, and 270 to 272; these read RL and LSK. The 'KMSKS' region signature appears at 269–273; sequence ILSKR.

Belongs to the class-I aminoacyl-tRNA synthetase family. In terms of assembly, monomer.

The protein resides in the cytoplasm. The enzyme catalyses tRNA(Gln) + L-glutamine + ATP = L-glutaminyl-tRNA(Gln) + AMP + diphosphate. This chain is Glutamine--tRNA ligase, found in Buchnera aphidicola subsp. Acyrthosiphon pisum (strain APS) (Acyrthosiphon pisum symbiotic bacterium).